The chain runs to 452 residues: UDP-N-acetylmuramoylalanine--D-glutamate ligase (452 aa).

119 to 125 provides a ligand contact to ATP; it reads GSNGKTT.

It belongs to the MurCDEF family.

The protein resides in the cytoplasm. It catalyses the reaction UDP-N-acetyl-alpha-D-muramoyl-L-alanine + D-glutamate + ATP = UDP-N-acetyl-alpha-D-muramoyl-L-alanyl-D-glutamate + ADP + phosphate + H(+). The protein operates within cell wall biogenesis; peptidoglycan biosynthesis. Its function is as follows. Cell wall formation. Catalyzes the addition of glutamate to the nucleotide precursor UDP-N-acetylmuramoyl-L-alanine (UMA). The sequence is that of UDP-N-acetylmuramoylalanine--D-glutamate ligase from Streptococcus pyogenes serotype M6 (strain ATCC BAA-946 / MGAS10394).